Consider the following 671-residue polypeptide: Polyadenylate-binding protein 8 (671 aa).

4 RRM domains span residues 45 to 123 (TSLY…YSVR), 133 to 210 (GNIF…PFVH), 224 to 301 (TNVY…KAQK), and 327 to 404 (SNLY…LAQR). The tract at residues 467 to 526 (LVPGMRPGGSPMPNFFMPMMQQGQQQQQQQQQQQRPGGGRRGALPQPQQPSPMMQQQMHP) is disordered. Composition is skewed to low complexity over residues 483-501 (MPMMQQGQQQQQQQQQQQR) and 508-525 (GALPQPQQPSPMMQQQMH). Positions 573–650 (PIVALATRLA…AMDVLRSVAQ (78 aa)) constitute a PABC domain.

It belongs to the polyadenylate-binding protein type-1 family. In terms of assembly, interacts with ERD15/CID1. Interacts with Turnip mosaic virus (TuMV) VPg-Pro and RNA-dependent RNA polymerase (RdRp). Expressed predominantly in immature flowers.

Its subcellular location is the cytoplasm. The protein resides in the nucleus. Functionally, binds the poly(A) tail of mRNA. Appears to be an important mediator of the multiple roles of the poly(A) tail in mRNA biogenesis, stability and translation. During infection with potyvirus TuMV, acts as a potential integral component of the viral replicase complex that could play an important role in the regulation of potyviral RNA-dependent RNA polymerase (RdRp). The chain is Polyadenylate-binding protein 8 (PAB8) from Arabidopsis thaliana (Mouse-ear cress).